A 41-amino-acid polypeptide reads, in one-letter code: Large ribosomal subunit protein bL36 (41 aa).

Belongs to the bacterial ribosomal protein bL36 family.

The protein is Large ribosomal subunit protein bL36 of Rickettsia prowazekii (strain Madrid E).